The following is a 55-amino-acid chain: uncharacterized protein (55 aa).

A helical transmembrane segment spans residues 27–47; that stretch reads IFLIYHFSPIYCPYLFLFTVF.

The protein resides in the membrane. This is an uncharacterized protein from Acheta domesticus (House cricket).